The sequence spans 43 residues: Potassium channel toxin gamma-KTx 4.2 (43 aa).

Disulfide bonds link Cys-5/Cys-23, Cys-11/Cys-34, Cys-20/Cys-39, and Cys-24/Cys-41.

This sequence belongs to the ergtoxin family. Gamma-KTx 4 subfamily. As to expression, expressed by the venom gland.

It localises to the secreted. In terms of biological role, reversibly blocks Kv11/ERG potassium channels. The protein is Potassium channel toxin gamma-KTx 4.2 of Centruroides noxius (Mexican scorpion).